We begin with the raw amino-acid sequence, 910 residues long: Staphylococcal nuclease domain-containing protein 1 (910 aa).

Residue Ala2 is modified to N-acetylalanine. 3 consecutive TNase-like domains span residues 18–166 (TVQR…MWSE), 193–328 (KPVN…IWRD), and 341–496 (KQFV…LHSK). Thr103 bears the Phosphothreonine mark. Lys193 is modified (N6-acetyllysine). The residue at position 240 (Thr240) is a Phosphothreonine. Short sequence motifs (nuclear localization signal) lie at residues 321–325 (RRLRI) and 388–392 (KKLRP). A Phosphoserine modification is found at Ser426. A Glycyl lysine isopeptide (Lys-Gly) (interchain with G-Cter in SUMO2) cross-link involves residue Lys513. The 136-residue stretch at 525–660 (GRSEAVVEYV…KQKKEKVWAH (136 aa)) folds into the TNase-like 4 domain. Position 641 is an N6-acetyllysine (Lys641). The residue at position 645 (Ser645) is a Phosphoserine. The Tudor domain occupies 729-787 (APRRGEFCIAKFVDGEWYRARVEKVESPAKVHVFYIDYGNREILPSTRLGTLPPAFSTR). Thr779 is modified (phosphothreonine). 2 positions are modified to phosphoserine: Ser785 and Ser909.

In terms of assembly, forms a ternary complex with STAT6 and POLR2A. Associates with the RNA-induced silencing complex (RISC). Interacts with the RISC components AGO2, FMR1 and TNRC6A. Interacts with GTF2E1 and GTF2E2. Interacts with PIM1. Interacts with STAT5. Interacts with SYT11 (via C2 2 domain); the interaction with SYT11 is direct. Post-translationally, phosphorylated by PIM1 in vitro. In terms of tissue distribution, in lactating cows highly expressed in mammary epithelial cells.

The protein localises to the cytoplasm. It localises to the nucleus. The protein resides in the melanosome. The catalysed reaction is Endonucleolytic cleavage to nucleoside 3'-phosphates and 3'-phosphooligonucleotide end-products.. Its function is as follows. Endonuclease that mediates miRNA decay of both protein-free and AGO2-loaded miRNAs. As part of its function in miRNA decay, regulates mRNAs involved in G1-to-S phase transition. Functions as a bridging factor between STAT6 and the basal transcription factor. Plays a role in PIM1 regulation of MYB activity. Functions as a transcriptional coactivator for STAT5. The chain is Staphylococcal nuclease domain-containing protein 1 (SND1) from Bos taurus (Bovine).